The chain runs to 127 residues: Small ribosomal subunit protein uS13 (127 aa).

The disordered stretch occupies residues 97–127 (PVRGQRTRTNARTRRGRRVTVAGKKKAPSKK). Residues 101–127 (QRTRTNARTRRGRRVTVAGKKKAPSKK) are compositionally biased toward basic residues.

This sequence belongs to the universal ribosomal protein uS13 family. As to quaternary structure, part of the 30S ribosomal subunit. Forms a loose heterodimer with protein S19. Forms two bridges to the 50S subunit in the 70S ribosome.

Its function is as follows. Located at the top of the head of the 30S subunit, it contacts several helices of the 16S rRNA. In the 70S ribosome it contacts the 23S rRNA (bridge B1a) and protein L5 of the 50S subunit (bridge B1b), connecting the 2 subunits; these bridges are implicated in subunit movement. Contacts the tRNAs in the A and P-sites. The sequence is that of Small ribosomal subunit protein uS13 from Microcystis aeruginosa (strain NIES-843 / IAM M-2473).